We begin with the raw amino-acid sequence, 490 residues long: Gallate decarboxylase (490 aa).

D165 provides a ligand contact to Mn(2+). Residues I168 to R170 and G187 contribute to the prenylated FMN site. E233 serves as a coordination point for Mn(2+). E289 acts as the Proton acceptor in catalysis.

Belongs to the UbiD family. Requires prenylated FMN as cofactor. Mn(2+) is required as a cofactor.

The catalysed reaction is 3,4,5-trihydroxybenzoate + H(+) = 1,2,3-trihydroxybenzene + CO2. It catalyses the reaction 3,4-dihydroxybenzoate + H(+) = catechol + CO2. In terms of biological role, involved in tannin degradation. Catalyzes the decarboxylation of gallic acid and protocatechuic acid to pyrogallol and catechol, respectively. This chain is Gallate decarboxylase, found in Lactiplantibacillus plantarum (strain ATCC BAA-793 / NCIMB 8826 / WCFS1) (Lactobacillus plantarum).